The primary structure comprises 185 residues: Ribosome-recycling factor (185 aa).

Belongs to the RRF family.

It is found in the cytoplasm. In terms of biological role, responsible for the release of ribosomes from messenger RNA at the termination of protein biosynthesis. May increase the efficiency of translation by recycling ribosomes from one round of translation to another. This is Ribosome-recycling factor from Shewanella piezotolerans (strain WP3 / JCM 13877).